The following is a 208-amino-acid chain: 3-demethoxyubiquinol 3-hydroxylase (208 aa).

Residues Glu57, Glu87, His90, Glu139, Glu171, and His174 each contribute to the Fe cation site.

This sequence belongs to the COQ7 family. Fe cation serves as cofactor.

Its subcellular location is the cell membrane. It catalyses the reaction a 5-methoxy-2-methyl-3-(all-trans-polyprenyl)benzene-1,4-diol + AH2 + O2 = a 3-demethylubiquinol + A + H2O. The protein operates within cofactor biosynthesis; ubiquinone biosynthesis. Catalyzes the hydroxylation of 2-nonaprenyl-3-methyl-6-methoxy-1,4-benzoquinol during ubiquinone biosynthesis. This is 3-demethoxyubiquinol 3-hydroxylase from Nitrosomonas eutropha (strain DSM 101675 / C91 / Nm57).